The sequence spans 266 residues: Probable sulfate transport system permease protein cysT (266 aa).

Transmembrane regions (helical) follow at residues 12–32 (ILLF…FLLI), 59–79 (MAFY…WVLT), 91–111 (AAVD…LATV), 129–149 (IVFT…PFVI), 181–201 (VILP…FSRA), 206–226 (GSIV…SVLI), and 236–256 (LGAS…LLLI). Residues 53–257 (YLLTVQMAFY…IALFTLLLIN (205 aa)) form the ABC transmembrane type-1 domain.

Belongs to the binding-protein-dependent transport system permease family. CysTW subfamily.

The protein resides in the plastid. Its subcellular location is the chloroplast membrane. Part of the ABC transporter complex cysAWTP (TC 3.A.1.6.1) involved in sulfate/thiosulfate import. Probably responsible for the translocation of the substrate across the membrane. The protein is Probable sulfate transport system permease protein cysT (cysT) of Chlorella vulgaris (Green alga).